The sequence spans 519 residues: Cytochrome P450 4A22 (519 aa).

A propeptide spanning residues 1–4 is cleaved from the precursor; it reads MSVS. Residue E321 coordinates heme. At S440 the chain carries Phosphoserine. Residue C457 participates in heme binding.

It belongs to the cytochrome P450 family.

Its subcellular location is the endoplasmic reticulum membrane. The protein resides in the microsome membrane. The catalysed reaction is an omega-methyl-long-chain fatty acid + reduced [NADPH--hemoprotein reductase] + O2 = an omega-hydroxy-long-chain fatty acid + oxidized [NADPH--hemoprotein reductase] + H2O + H(+). Functionally, catalyzes the omega- and (omega-1)-hydroxylation of various fatty acids such as laurate and palmitate. Shows no activity towards arachidonic acid and prostaglandin A1. Lacks functional activity in the kidney and does not contribute to renal 20-hydroxyeicosatetraenoic acid (20-HETE) biosynthesis. This chain is Cytochrome P450 4A22 (CYP4A22), found in Homo sapiens (Human).